We begin with the raw amino-acid sequence, 308 residues long: Pantothenate synthetase (308 aa).

ATP is bound at residue 39-46 (MGALHDGH). Catalysis depends on His-46, which acts as the Proton donor. (R)-pantoate is bound at residue Gln-71. Gln-71 is a binding site for beta-alanine. Residue 157–160 (GEKD) participates in ATP binding. Gln-163 lines the (R)-pantoate pocket. ATP-binding positions include Val-186 and 194 to 197 (MSSR). Residues 286–308 (IETPAGTAGPDGDRQYAQSPWRN) form a disordered region.

Belongs to the pantothenate synthetase family. Homodimer.

The protein localises to the cytoplasm. The enzyme catalyses (R)-pantoate + beta-alanine + ATP = (R)-pantothenate + AMP + diphosphate + H(+). Its pathway is cofactor biosynthesis; (R)-pantothenate biosynthesis; (R)-pantothenate from (R)-pantoate and beta-alanine: step 1/1. Its function is as follows. Catalyzes the condensation of pantoate with beta-alanine in an ATP-dependent reaction via a pantoyl-adenylate intermediate. The protein is Pantothenate synthetase of Mycobacterium avium (strain 104).